The primary structure comprises 103 residues: Large ribosomal subunit protein uL24 (103 aa).

It belongs to the universal ribosomal protein uL24 family. As to quaternary structure, part of the 50S ribosomal subunit.

Its function is as follows. One of two assembly initiator proteins, it binds directly to the 5'-end of the 23S rRNA, where it nucleates assembly of the 50S subunit. In terms of biological role, one of the proteins that surrounds the polypeptide exit tunnel on the outside of the subunit. The protein is Large ribosomal subunit protein uL24 of Haemophilus ducreyi (strain 35000HP / ATCC 700724).